The primary structure comprises 351 residues: Cyclic AMP-dependent transcription factor ATF-4 (351 aa).

Residue Lys53 forms a Glycyl lysine isopeptide (Lys-Gly) (interchain with G-Cter in SUMO2) linkage. The segment at Glu210 to Met268 is disordered. Thr213 carries the post-translational modification Phosphothreonine. Ser215 is modified (phosphoserine; by CK2). The BetaTrCP degron motif signature appears at Ser215–Ser224. Residues Ser219, Ser224, Ser231, and Ser235 each carry the phosphoserine modification. A compositionally biased stretch (polar residues) spans Gly230–Leu246. Position 236 is a 4-hydroxyproline (Pro236). The residue at position 245 (Ser245) is a Phosphoserine; by RPS6KA3. Ser248 carries the phosphoserine modification. Residues Lys259, Lys267, and Lys272 each participate in a glycyl lysine isopeptide (Lys-Gly) (interchain with G-Cter in SUMO2) cross-link. One can recognise a bZIP domain in the interval Leu278 to Val341. A basic motif region spans residues Lys280–Arg300. A coiled-coil region spans residues Lys280–Glu340. The segment at Ala305 to Val341 is interaction with GABBR1. Positions Leu306–Leu334 are leucine-zipper. The residue at position 311 (Lys311) is an N6-acetyllysine.

This sequence belongs to the bZIP family. As to quaternary structure, binds DNA as a homodimer and as a heterodimer. Heterodimer; heterodimerizes with CEBPB. Heterodimer; heterodimerizes with DDIT3/CHOP. Interacts with CEP290 (via an N-terminal region). Interacts with NEK6, DAPK2 (isoform 2) and ZIPK/DAPK3. Interacts (via its leucine zipper domain) with GABBR1 and GABBR2 (via their C-termini). Forms a heterodimer with TXLNG in osteoblasts. Interacts (via its DNA binding domain) with FOXO1 (C-terminal half); the interaction occurs in osteoblasts and regulates glucose homeostasis through suppression of beta-cell proliferation and a decrease in insulin production. Interacts with SATB2; the interaction results in enhanced DNA binding and transactivation by these transcription factors. Interacts with ABRAXAS2. Interacts with TRIB3, inhibiting the transactivation activity of ATF4. Interacts with DISC1; which inhibits ATF4 transcription factor activity by disrupting ATF4 dimerization and DNA-binding. Interacts with EP300/p300; EP300/p300 stabilizes ATF4 and increases its transcriptional activity independently of its catalytic activity by preventing its ubiquitination. In terms of processing, ubiquitinated by SCF(BTRC) in response to mTORC1 signal, followed by proteasomal degradation and leading to down-regulate expression of SIRT4. Interaction with EP300/p300 inhibits ubiquitination by SCF(BTRC). Post-translationally, phosphorylation at Ser-245 by RPS6KA3/RSK2 in osteoblasts enhances transactivation activity and promotes osteoblast differentiation. Phosphorylated on the betaTrCP degron motif at Ser-219, followed by phosphorylation at Thr-213, Ser-224, Ser-231, Ser-235 and Ser-248, promoting interaction with BTRC and ubiquitination. Phosphorylation is promoted by mTORC1. Phosphorylation at Ser-215 by CK2 decreases its stability. Phosphorylated by NEK6. Hydroxylated by PHD3, leading to decreased protein stability.

Its subcellular location is the nucleus. It localises to the nucleus speckle. The protein resides in the cytoplasm. It is found in the cell membrane. The protein localises to the cytoskeleton. Its subcellular location is the microtubule organizing center. It localises to the centrosome. Transcription factor that binds the cAMP response element (CRE) (consensus: 5'-GTGACGT[AC][AG]-3') and displays two biological functions, as regulator of metabolic and redox processes under normal cellular conditions, and as master transcription factor during integrated stress response (ISR). Binds to asymmetric CRE's as a heterodimer and to palindromic CRE's as a homodimer. Core effector of the ISR, which is required for adaptation to various stress such as endoplasmic reticulum (ER) stress, amino acid starvation, mitochondrial stress or oxidative stress. During ISR, ATF4 translation is induced via an alternative ribosome translation re-initiation mechanism in response to EIF2S1/eIF-2-alpha phosphorylation, and stress-induced ATF4 acts as a master transcription factor of stress-responsive genes in order to promote cell recovery. Promotes the transcription of genes linked to amino acid sufficiency and resistance to oxidative stress to protect cells against metabolic consequences of ER oxidation. Activates the transcription of NLRP1, possibly in concert with other factors in response to ER stress. Activates the transcription of asparagine synthetase (ASNS) in response to amino acid deprivation or ER stress. However, when associated with DDIT3/CHOP, the transcriptional activation of the ASNS gene is inhibited in response to amino acid deprivation. Together with DDIT3/CHOP, mediates programmed cell death by promoting the expression of genes involved in cellular amino acid metabolic processes, mRNA translation and the terminal unfolded protein response (terminal UPR), a cellular response that elicits programmed cell death when ER stress is prolonged and unresolved. Activates the expression of COX7A2L/SCAF1 downstream of the EIF2AK3/PERK-mediated unfolded protein response, thereby promoting formation of respiratory chain supercomplexes and increasing mitochondrial oxidative phosphorylation. Together with DDIT3/CHOP, activates the transcription of the IRS-regulator TRIB3 and promotes ER stress-induced neuronal cell death by regulating the expression of BBC3/PUMA in response to ER stress. May cooperate with the UPR transcriptional regulator QRICH1 to regulate ER protein homeostasis which is critical for cell viability in response to ER stress. In the absence of stress, ATF4 translation is at low levels and it is required for normal metabolic processes such as embryonic lens formation, fetal liver hematopoiesis, bone development and synaptic plasticity. Acts as a regulator of osteoblast differentiation in response to phosphorylation by RPS6KA3/RSK2: phosphorylation in osteoblasts enhances transactivation activity and promotes expression of osteoblast-specific genes and post-transcriptionally regulates the synthesis of Type I collagen, the main constituent of the bone matrix. Cooperates with FOXO1 in osteoblasts to regulate glucose homeostasis through suppression of beta-cell production and decrease in insulin production. Activates transcription of SIRT4. Regulates the circadian expression of the core clock component PER2 and the serotonin transporter SLC6A4. Binds in a circadian time-dependent manner to the cAMP response elements (CRE) in the SLC6A4 and PER2 promoters and periodically activates the transcription of these genes. Mainly acts as a transcriptional activator in cellular stress adaptation, but it can also act as a transcriptional repressor: acts as a regulator of synaptic plasticity by repressing transcription, thereby inhibiting induction and maintenance of long-term memory. Regulates synaptic functions via interaction with DISC1 in neurons, which inhibits ATF4 transcription factor activity by disrupting ATF4 dimerization and DNA-binding. In terms of biological role, (Microbial infection) Binds to a Tax-responsive enhancer element in the long terminal repeat of HTLV-I. The chain is Cyclic AMP-dependent transcription factor ATF-4 from Homo sapiens (Human).